The following is an 886-amino-acid chain: Alanine--tRNA ligase (886 aa).

The Zn(2+) site is built by His564, His568, Cys666, and His670.

It belongs to the class-II aminoacyl-tRNA synthetase family. It depends on Zn(2+) as a cofactor.

It localises to the cytoplasm. It catalyses the reaction tRNA(Ala) + L-alanine + ATP = L-alanyl-tRNA(Ala) + AMP + diphosphate. In terms of biological role, catalyzes the attachment of alanine to tRNA(Ala) in a two-step reaction: alanine is first activated by ATP to form Ala-AMP and then transferred to the acceptor end of tRNA(Ala). Also edits incorrectly charged Ser-tRNA(Ala) and Gly-tRNA(Ala) via its editing domain. The sequence is that of Alanine--tRNA ligase from Prochlorococcus marinus (strain MIT 9312).